Consider the following 943-residue polypeptide: Centromere protein C (943 aa).

Lys45 is covalently cross-linked (Glycyl lysine isopeptide (Lys-Gly) (interchain with G-Cter in SUMO2)). The tract at residues Cys70–Lys91 is disordered. Ser73 and Ser96 each carry phosphoserine. A Glycyl lysine isopeptide (Lys-Gly) (interchain with G-Cter in SUMO2) cross-link involves residue Lys119. Phosphothreonine is present on Thr130. Lys134 participates in a covalent cross-link: Glycyl lysine isopeptide (Lys-Gly) (interchain with G-Cter in SUMO2). Ser146 carries the phosphoserine modification. Lys180 participates in a covalent cross-link: Glycyl lysine isopeptide (Lys-Gly) (interchain with G-Cter in SUMO2). Phosphothreonine is present on Thr183. Ser189 carries the phosphoserine modification. Glycyl lysine isopeptide (Lys-Gly) (interchain with G-Cter in SUMO2) cross-links involve residues Lys212 and Lys217. Residues Val224 to Pro239 are compositionally biased toward basic and acidic residues. The segment at Val224–Ser250 is disordered. Ser225 carries the post-translational modification Phosphoserine. Glycyl lysine isopeptide (Lys-Gly) (interchain with G-Cter in SUMO2) cross-links involve residues Lys238 and Lys260. The Nuclear localization signal motif lies at Lys259–Lys273. Position 261 is a phosphoserine (Ser261). Glycyl lysine isopeptide (Lys-Gly) (interchain with G-Cter in SUMO2) cross-links involve residues Lys271, Lys273, and Lys297. Residues Ser316, Ser333, Ser376, and Ser397 each carry the phosphoserine modification. The tract at residues Leu358–Asp377 is disordered. Residues Tyr403–Val513 are disordered. Basic residues predominate over residues Arg412 to Met426. 2 stretches are compositionally biased toward basic and acidic residues: residues Gln438–Glu463 and Thr488–Pro510. At Ser439 the chain carries Phosphoserine. Lys440 participates in a covalent cross-link: Glycyl lysine isopeptide (Lys-Gly) (interchain with G-Cter in SUMO2). The Nuclear localization signal motif lies at Lys484–Arg499. Ser528 carries the post-translational modification Phosphoserine. Residue Lys534 forms a Glycyl lysine isopeptide (Lys-Gly) (interchain with G-Cter in SUMO2) linkage. 2 disordered regions span residues Glu537–Gly587 and Asp632–Lys717. A Phosphoserine modification is found at Ser538. A Nuclear localization signal motif is present at residues Arg558–Lys574. Over residues Asn570–Thr583 the composition is skewed to basic residues. Residues Cys633 to Asp672 are compositionally biased toward polar residues. A Glycyl lysine isopeptide (Lys-Gly) (interchain with G-Cter in SUMO2) cross-link involves residue Lys677. Ser684, Ser709, and Ser710 each carry phosphoserine. Residues Val706–Gln715 show a composition bias toward basic and acidic residues. Lys727 is covalently cross-linked (Glycyl lysine isopeptide (Lys-Gly) (interchain with G-Cter in SUMO2)). Thr734 carries the post-translational modification Phosphothreonine. Positions Val737–Gln759 are MIF2 homology domain II. A phosphoserine mark is found at Ser763 and Ser773. The Nuclear localization signal motif lies at Lys780 to Arg798. A Glycyl lysine isopeptide (Lys-Gly) (interchain with G-Cter in SUMO2) cross-link involves residue Lys807. The tract at residues Leu890–Arg943 is MIF2 homology domain III.

The protein belongs to the CENP-C/MIF2 family. As to quaternary structure, oligomer. Component of the CENPA-NAC complex, at least composed of CENPA, CENPC, CENPH, CENPM, CENPN, CENPT and CENPU. The CENPA-NAC complex interacts with the CENPA-CAD complex, composed of CENPI, CENPK, CENPL, CENPO, CENPP, CENPQ, CENPR and CENPS. Binds to DAXX. Interacts with DNMT3B. Interacts directly with CENPA. Identified in a centromere complex containing histones H2A, H2B and H4, and at least CENPA, CENPB, CENPC, CENPT, CENPN, HJURP, SUPT16H, SSRP1 and RSF1. Interacts with MEIKIN.

Its subcellular location is the nucleus. It localises to the chromosome. The protein resides in the centromere. It is found in the kinetochore. In terms of biological role, component of the CENPA-NAC (nucleosome-associated) complex, a complex that plays a central role in assembly of kinetochore proteins, mitotic progression and chromosome segregation. The CENPA-NAC complex recruits the CENPA-CAD (nucleosome distal) complex and may be involved in incorporation of newly synthesized CENPA into centromeres. CENPC recruits DNA methylation and DNMT3B to both centromeric and pericentromeric satellite repeats and regulates the histone code in these regions. This Homo sapiens (Human) protein is Centromere protein C (CENPC).